The chain runs to 358 residues: Methionine aminopeptidase 2 (358 aa).

His109 provides a ligand contact to substrate. Residues Asp130, Asp141, and His210 each coordinate a divalent metal cation. Position 218 (His218) interacts with substrate. Residues Glu243 and Glu339 each coordinate a divalent metal cation.

This sequence belongs to the peptidase M24A family. Methionine aminopeptidase eukaryotic type 2 subfamily. Co(2+) is required as a cofactor. It depends on Zn(2+) as a cofactor. Requires Mn(2+) as cofactor. Fe(2+) serves as cofactor.

The protein localises to the cytoplasm. The enzyme catalyses Release of N-terminal amino acids, preferentially methionine, from peptides and arylamides.. Irreversibly inhibited by the fungal metabolite fumagillin and the fumagillin analog TNP470, antiangiogenic drugs. Its function is as follows. Cotranslationally removes the N-terminal methionine from nascent proteins. The N-terminal methionine is often cleaved when the second residue in the primary sequence is small and uncharged (Met-Ala-, Cys, Gly, Pro, Ser, Thr, or Val). This Encephalitozoon hellem (strain ATCC 50504) (Microsporidian parasite) protein is Methionine aminopeptidase 2.